A 537-amino-acid chain; its full sequence is Pheophorbide a oxygenase, chloroplastic (537 aa).

The transit peptide at Met-1–Arg-49 directs the protein to the chloroplast. Residues Ala-51 to Glu-77 are disordered. A compositionally biased stretch (basic and acidic residues) spans Thr-62–Glu-77. One can recognise a Rieske domain in the interval Trp-88 to Val-200. Cys-130, His-132, Cys-150, and His-153 together coordinate [2Fe-2S] cluster.

As to quaternary structure, interacts with HCAR, SGR1, RCCR, PPH and the LHCII complex. Part of a SGR1-CCE-LHCII complex, which acts in chlorophyll breakdown.

It is found in the plastid. It localises to the chloroplast thylakoid membrane. It catalyses the reaction pheophorbide a + 2 reduced [2Fe-2S]-[ferredoxin] + O2 + 2 H(+) = red chlorophyll catabolite + 2 oxidized [2Fe-2S]-[ferredoxin]. It functions in the pathway porphyrin-containing compound metabolism; chlorophyll degradation. With respect to regulation, might be regulated by a phosphorylation/dephosphorylation mechanism. Catalyzes the key reaction of chlorophyll catabolism, porphyrin macrocycle cleavage of pheophorbide a (pheide a) to a primary fluorescent catabolite (pFCC). Works in a two-step reaction with red chlorophyll catabolite reductase (RCCR). Creates the intermediate RCC through the opening of the porphyrin macrocycle by the introduction of one atom of molecular oxygen at the alpha-methine bridge. Seems to be specific for pheide a. Belongs to the chlorophyll catabolic enzymes (CCEs). This is Pheophorbide a oxygenase, chloroplastic (PAO) from Arabidopsis thaliana (Mouse-ear cress).